Here is a 329-residue protein sequence, read N- to C-terminus: Diaminopimelate epimerase (329 aa).

The substrate site is built by N14 and N73. Residue C82 is the Proton donor of the active site. Substrate-binding positions include 83 to 84 (GN), N170, N206, and 224 to 225 (ER). Residue C233 is the Proton acceptor of the active site. Residue 234 to 235 (GT) participates in substrate binding.

The protein belongs to the diaminopimelate epimerase family. Homodimer.

The protein resides in the cytoplasm. It catalyses the reaction (2S,6S)-2,6-diaminopimelate = meso-2,6-diaminopimelate. The protein operates within amino-acid biosynthesis; L-lysine biosynthesis via DAP pathway; DL-2,6-diaminopimelate from LL-2,6-diaminopimelate: step 1/1. Catalyzes the stereoinversion of LL-2,6-diaminopimelate (L,L-DAP) to meso-diaminopimelate (meso-DAP), a precursor of L-lysine and an essential component of the bacterial peptidoglycan. The sequence is that of Diaminopimelate epimerase from Listeria monocytogenes serovar 1/2a (strain ATCC BAA-679 / EGD-e).